The following is an 82-amino-acid chain: Putative membrane protein insertion efficiency factor (82 aa).

Belongs to the UPF0161 family.

Its subcellular location is the cell membrane. Could be involved in insertion of integral membrane proteins into the membrane. The sequence is that of Putative membrane protein insertion efficiency factor from Streptococcus thermophilus (strain ATCC BAA-491 / LMD-9).